The following is a 602-amino-acid chain: Translation initiation factor IF-2 (602 aa).

A tr-type G domain is found at 112 to 281 (KRAPIITIMG…LLLCEVLDLK (170 aa)). Residues 121–128 (GHVDHGKT) are G1. 121–128 (GHVDHGKT) contributes to the GTP binding site. The segment at 146–150 (GITQH) is G2. A G3 region spans residues 167–170 (DTPG). Residues 167 to 171 (DTPGH) and 221 to 224 (NKMD) contribute to the GTP site. The tract at residues 221-224 (NKMD) is G4. The segment at 257 to 259 (SAL) is G5.

The protein belongs to the TRAFAC class translation factor GTPase superfamily. Classic translation factor GTPase family. IF-2 subfamily.

The protein localises to the cytoplasm. Its function is as follows. One of the essential components for the initiation of protein synthesis. Protects formylmethionyl-tRNA from spontaneous hydrolysis and promotes its binding to the 30S ribosomal subunits. Also involved in the hydrolysis of GTP during the formation of the 70S ribosomal complex. The protein is Translation initiation factor IF-2 of Mycoplasmopsis synoviae (strain 53) (Mycoplasma synoviae).